We begin with the raw amino-acid sequence, 206 residues long: Small ribosomal subunit protein uS4c (206 aa).

In terms of domain architecture, S4 RNA-binding spans methionine 94–asparagine 152.

Belongs to the universal ribosomal protein uS4 family. Part of the 30S ribosomal subunit. Contacts protein S5. The interaction surface between S4 and S5 is involved in control of translational fidelity.

The protein localises to the plastid. It localises to the chloroplast. Functionally, one of the primary rRNA binding proteins, it binds directly to 16S rRNA where it nucleates assembly of the body of the 30S subunit. Its function is as follows. With S5 and S12 plays an important role in translational accuracy. The sequence is that of Small ribosomal subunit protein uS4c (rps4) from Chara vulgaris (Common stonewort).